A 455-amino-acid chain; its full sequence is UDP-N-acetylmuramoylalanine--D-glutamate ligase (455 aa).

119–125 (GTNGKTT) is a binding site for ATP.

This sequence belongs to the MurCDEF family.

It localises to the cytoplasm. The enzyme catalyses UDP-N-acetyl-alpha-D-muramoyl-L-alanine + D-glutamate + ATP = UDP-N-acetyl-alpha-D-muramoyl-L-alanyl-D-glutamate + ADP + phosphate + H(+). It participates in cell wall biogenesis; peptidoglycan biosynthesis. Cell wall formation. Catalyzes the addition of glutamate to the nucleotide precursor UDP-N-acetylmuramoyl-L-alanine (UMA). This Listeria monocytogenes serovar 1/2a (strain ATCC BAA-679 / EGD-e) protein is UDP-N-acetylmuramoylalanine--D-glutamate ligase.